The following is a 691-amino-acid chain: Elongation factor G (691 aa).

The tr-type G domain occupies 12-286 (KKLRNIGIMA…GILEYLPSPL (275 aa)). GTP-binding positions include 21-28 (AHIDAGKT), 85-89 (DTPGH), and 139-142 (NKMD).

Belongs to the TRAFAC class translation factor GTPase superfamily. Classic translation factor GTPase family. EF-G/EF-2 subfamily.

It localises to the cytoplasm. Catalyzes the GTP-dependent ribosomal translocation step during translation elongation. During this step, the ribosome changes from the pre-translocational (PRE) to the post-translocational (POST) state as the newly formed A-site-bound peptidyl-tRNA and P-site-bound deacylated tRNA move to the P and E sites, respectively. Catalyzes the coordinated movement of the two tRNA molecules, the mRNA and conformational changes in the ribosome. This chain is Elongation factor G, found in Thermosipho africanus (strain TCF52B).